Here is a 382-residue protein sequence, read N- to C-terminus: Galactokinase (382 aa).

34-37 (EHTD) provides a ligand contact to substrate. 124–130 (GAGLSSS) serves as a coordination point for ATP. Residues Ser-130 and Glu-162 each coordinate Mg(2+). The active-site Proton acceptor is Asp-174. Tyr-223 serves as a coordination point for substrate.

It belongs to the GHMP kinase family. GalK subfamily.

It localises to the cytoplasm. It carries out the reaction alpha-D-galactose + ATP = alpha-D-galactose 1-phosphate + ADP + H(+). The protein operates within carbohydrate metabolism; galactose metabolism. Its function is as follows. Catalyzes the transfer of the gamma-phosphate of ATP to D-galactose to form alpha-D-galactose-1-phosphate (Gal-1-P). The chain is Galactokinase from Salmonella newport (strain SL254).